Consider the following 303-residue polypeptide: MLPFCFEMTSMSYIGRFAPSPSGPLHFGSLIAALGSYFQAKSQHGQWLVRIEDLDPPREMPGAADLILKTLETYHLFWDGEVVYQSQRHHLYQAQIDHWLQSGQAYYCQCSRKQIKEMGGYYNGHCQELHLDAGAIRLKMTQPITHFDDLRHGQMHIPLELAQEDFIIKRRDGLFAYNLAVVLDDIDQGVTEVVRGADLIEPTGRQISLYRMLGQVPVRYLHLPLAMDKNGNKLSKQNHATGIDLTHPASMILEAMAFLGFAIPKELHQANLDEILHWGVQNWRLNQLPESLEITARFSNGTA.

L-glutamate-binding positions include 16-20 and Glu52; that span reads RFAPS. Residues 19–29 carry the 'HIGH' region motif; that stretch reads PSPSGPLHFGS. Positions 108, 110, 122, and 126 each coordinate Zn(2+). Residues Tyr177 and Arg195 each coordinate L-glutamate. A 'KMSKS' region motif is present at residues 233-237; that stretch reads KLSKQ. Lys236 lines the ATP pocket.

It belongs to the class-I aminoacyl-tRNA synthetase family. GluQ subfamily. Zn(2+) is required as a cofactor.

In terms of biological role, catalyzes the tRNA-independent activation of glutamate in presence of ATP and the subsequent transfer of glutamate onto a tRNA(Asp). Glutamate is transferred on the 2-amino-5-(4,5-dihydroxy-2-cyclopenten-1-yl) moiety of the queuosine in the wobble position of the QUC anticodon. The chain is Glutamyl-Q tRNA(Asp) synthetase from Vibrio vulnificus (strain CMCP6).